Consider the following 102-residue polypeptide: Small ribosomal subunit protein uS10 (102 aa).

The protein belongs to the universal ribosomal protein uS10 family. As to quaternary structure, part of the 30S ribosomal subunit.

In terms of biological role, involved in the binding of tRNA to the ribosomes. The chain is Small ribosomal subunit protein uS10 from Paramagnetospirillum magneticum (strain ATCC 700264 / AMB-1) (Magnetospirillum magneticum).